Reading from the N-terminus, the 218-residue chain is 7-cyano-7-deazaguanine synthase (218 aa).

ATP is bound at residue 9–19 (YSGGMDSFTVL). 4 residues coordinate Zn(2+): C185, C193, C196, and C199.

Belongs to the QueC family. Zn(2+) is required as a cofactor.

It catalyses the reaction 7-carboxy-7-deazaguanine + NH4(+) + ATP = 7-cyano-7-deazaguanine + ADP + phosphate + H2O + H(+). It participates in purine metabolism; 7-cyano-7-deazaguanine biosynthesis. In terms of biological role, catalyzes the ATP-dependent conversion of 7-carboxy-7-deazaguanine (CDG) to 7-cyano-7-deazaguanine (preQ(0)). The polypeptide is 7-cyano-7-deazaguanine synthase (Alteromonas mediterranea (strain DSM 17117 / CIP 110805 / LMG 28347 / Deep ecotype)).